The sequence spans 730 residues: Polyphosphate kinase (730 aa).

Positions 1–21 (MMRHDRNVTEIDAETRPDENL) are enriched in basic and acidic residues. Positions 1–39 (MMRHDRNVTEIDAETRPDENLWHSGDSAVGAPPAATPAA) are disordered. Position 86 (Asn86) interacts with ATP. The Mg(2+) site is built by Arg423 and Arg453. His483 acts as the Phosphohistidine intermediate in catalysis. ATP is bound by residues Tyr516, Arg612, and His640.

This sequence belongs to the polyphosphate kinase 1 (PPK1) family. Mg(2+) serves as cofactor. In terms of processing, an intermediate of this reaction is the autophosphorylated ppk in which a phosphate is covalently linked to a histidine residue through a N-P bond.

The catalysed reaction is [phosphate](n) + ATP = [phosphate](n+1) + ADP. In terms of biological role, catalyzes the reversible transfer of the terminal phosphate of ATP to form a long-chain polyphosphate (polyP). The protein is Polyphosphate kinase of Mycobacterium avium (strain 104).